Consider the following 467-residue polypeptide: ATP synthase subunit beta (467 aa).

152–159 (GGAGVGKT) lines the ATP pocket.

This sequence belongs to the ATPase alpha/beta chains family. As to quaternary structure, F-type ATPases have 2 components, CF(1) - the catalytic core - and CF(0) - the membrane proton channel. CF(1) has five subunits: alpha(3), beta(3), gamma(1), delta(1), epsilon(1). CF(0) has three main subunits: a(1), b(2) and c(9-12). The alpha and beta chains form an alternating ring which encloses part of the gamma chain. CF(1) is attached to CF(0) by a central stalk formed by the gamma and epsilon chains, while a peripheral stalk is formed by the delta and b chains.

The protein localises to the cell inner membrane. It carries out the reaction ATP + H2O + 4 H(+)(in) = ADP + phosphate + 5 H(+)(out). Its function is as follows. Produces ATP from ADP in the presence of a proton gradient across the membrane. The catalytic sites are hosted primarily by the beta subunits. This Wolinella succinogenes (strain ATCC 29543 / DSM 1740 / CCUG 13145 / JCM 31913 / LMG 7466 / NCTC 11488 / FDC 602W) (Vibrio succinogenes) protein is ATP synthase subunit beta.